The primary structure comprises 414 residues: MKNNILEELKWRGLIKQVTNEQKILDAQNSNDAVYCGFDPTADSLHVGHLMMIITLKRFALQGFKPIALIGGATGMIGDPSFKASERVLQTKQQVDHNINKISTQLKEIIPTVSFVNNRDWLEDISLIDFLRDIGKHFNLSYLLAKESIATRIQTGLSVTEFCYTMLQAFDFYYLYKNNDCSVQIGGSDQWGNITSGIDFISDTINKNNKASGVTINLLTKSDGQKFGKTESGAVWLDKTKTSEYEFYQFWFNQTDEDSINLLKCLTFLTKDQIEQLIKQHNQQPAKHFLQKALASEMTKFVHQQQGLDKALKLTEAFFSGDLFSLTDDLFKMALNSLPNTQINKDTKVIDALVELKVASSKREAREFLKNKAILINNQVIEDENLVISSFDLIQNKYLLVKKGKKKYFVILVK.

Y35 is a binding site for L-tyrosine. Residues 40 to 49 (PTADSLHVGH) carry the 'HIGH' region motif. L-tyrosine contacts are provided by Y164 and Q168. The 'KMSKS' region signature appears at 226 to 230 (KFGKT). Residue K229 coordinates ATP. The S4 RNA-binding domain occupies 347–414 (TKVIDALVEL…KKKYFVILVK (68 aa)).

This sequence belongs to the class-I aminoacyl-tRNA synthetase family. TyrS type 1 subfamily. In terms of assembly, homodimer.

The protein resides in the cytoplasm. It catalyses the reaction tRNA(Tyr) + L-tyrosine + ATP = L-tyrosyl-tRNA(Tyr) + AMP + diphosphate + H(+). Its function is as follows. Catalyzes the attachment of tyrosine to tRNA(Tyr) in a two-step reaction: tyrosine is first activated by ATP to form Tyr-AMP and then transferred to the acceptor end of tRNA(Tyr). This Mycoplasma capricolum subsp. capricolum (strain California kid / ATCC 27343 / NCTC 10154) protein is Tyrosine--tRNA ligase.